We begin with the raw amino-acid sequence, 107 residues long: UPF0145 protein Ent638_1382 (107 aa).

This sequence belongs to the UPF0145 family.

In Enterobacter sp. (strain 638), this protein is UPF0145 protein Ent638_1382.